The sequence spans 895 residues: Tiger protein D1 (895 aa).

Residues 1–21 (MIHKMYFFLILLFSLFIIVYS) form the signal peptide. The Extracellular segment spans residues 22–861 (APNRVTRNET…ERKSSKLSGG (840 aa)). N-linked (GlcNAc...) asparagine glycosylation is found at asparagine 29, asparagine 52, asparagine 171, asparagine 181, asparagine 253, asparagine 257, asparagine 277, asparagine 288, asparagine 351, asparagine 368, asparagine 407, asparagine 428, asparagine 451, asparagine 481, asparagine 507, asparagine 521, asparagine 573, asparagine 583, asparagine 593, asparagine 623, asparagine 652, asparagine 685, asparagine 720, asparagine 757, asparagine 766, asparagine 780, and asparagine 799. The IPT/TIG 1 domain maps to 295–381 (AVISSISSVS…SGSDAVTFTY (87 aa)). 2 IPT/TIG domains span residues 560 to 638 (PKVE…SFYL) and 642 to 725 (PVIY…TLTY). Residues 862-882 (AIAGITIGCVAGAGALVGSVF) form a helical membrane-spanning segment. The Cytoplasmic segment spans residues 883 to 895 (YFKLITRVKKAFN).

Its subcellular location is the cell membrane. May be involved in the regulation of aggregation. Activates tgrC1. This chain is Tiger protein D1 (tgrD1), found in Dictyostelium discoideum (Social amoeba).